A 563-amino-acid polypeptide reads, in one-letter code: Arginine--tRNA ligase (563 aa).

Residues Pro-120–His-130 carry the 'HIGH' region motif.

This sequence belongs to the class-I aminoacyl-tRNA synthetase family. As to quaternary structure, monomer.

The protein resides in the cytoplasm. The catalysed reaction is tRNA(Arg) + L-arginine + ATP = L-arginyl-tRNA(Arg) + AMP + diphosphate. The sequence is that of Arginine--tRNA ligase from Clostridium botulinum (strain Loch Maree / Type A3).